A 272-amino-acid chain; its full sequence is Ribosome maturation factor RimP (272 aa).

The interval 209 to 272 is disordered; that stretch reads QNLGILPPPP…RGDIDPPEGD (64 aa). The span at 250-266 shows a compositional bias: basic and acidic residues; the sequence is NTKEHRLAAERLRRGDI.

This sequence belongs to the RimP family.

The protein resides in the cytoplasm. Required for maturation of 30S ribosomal subunits. The protein is Ribosome maturation factor RimP of Rhodopseudomonas palustris (strain BisA53).